The sequence spans 50 residues: Small ribosomal subunit protein uS14 (50 aa).

Cys15, Cys18, Cys33, and Cys36 together coordinate Zn(2+).

Belongs to the universal ribosomal protein uS14 family. Zinc-binding uS14 subfamily. Part of the 30S ribosomal subunit. Zn(2+) serves as cofactor.

Its function is as follows. Binds 16S rRNA, required for the assembly of 30S particles. The chain is Small ribosomal subunit protein uS14 from Methanosarcina mazei (strain ATCC BAA-159 / DSM 3647 / Goe1 / Go1 / JCM 11833 / OCM 88) (Methanosarcina frisia).